The primary structure comprises 119 residues: Small ribosomal subunit protein uS10 (119 aa).

The protein belongs to the universal ribosomal protein uS10 family. Component of the small ribosomal subunit. Mature ribosomes consist of a small (40S) and a large (60S) subunit. The 40S subunit contains about 32 different proteins and 1 molecule of RNA (18S). The 60S subunit contains 45 different proteins and 3 molecules of RNA (25S, 5.8S and 5S).

The protein resides in the cytoplasm. Functionally, component of the ribosome, a large ribonucleoprotein complex responsible for the synthesis of proteins in the cell. The small ribosomal subunit (SSU) binds messenger RNAs (mRNAs) and translates the encoded message by selecting cognate aminoacyl-transfer RNA (tRNA) molecules. The large subunit (LSU) contains the ribosomal catalytic site termed the peptidyl transferase center (PTC), which catalyzes the formation of peptide bonds, thereby polymerizing the amino acids delivered by tRNAs into a polypeptide chain. The nascent polypeptides leave the ribosome through a tunnel in the LSU and interact with protein factors that function in enzymatic processing, targeting, and the membrane insertion of nascent chains at the exit of the ribosomal tunnel. The chain is Small ribosomal subunit protein uS10 (RPS20) from Candida albicans (strain SC5314 / ATCC MYA-2876) (Yeast).